Here is a 324-residue protein sequence, read N- to C-terminus: Fibronectin type III domain-containing protein 8 (324 aa).

The Fibronectin type-III domain maps to proline 179 to threonine 280.

The sequence is that of Fibronectin type III domain-containing protein 8 (FNDC8) from Macaca fascicularis (Crab-eating macaque).